A 324-amino-acid chain; its full sequence is Elongation factor P--(R)-beta-lysine ligase (324 aa).

Substrate is bound at residue 75-77 (SPE). ATP is bound by residues 99–101 (RNK) and Asn-108. Tyr-117 contacts substrate. 243–244 (EL) contacts ATP. Glu-250 is a substrate binding site. Residue Gly-299 coordinates ATP.

This sequence belongs to the class-II aminoacyl-tRNA synthetase family. EpmA subfamily. In terms of assembly, homodimer.

The enzyme catalyses D-beta-lysine + L-lysyl-[protein] + ATP = N(6)-((3R)-3,6-diaminohexanoyl)-L-lysyl-[protein] + AMP + diphosphate + H(+). With EpmB is involved in the beta-lysylation step of the post-translational modification of translation elongation factor P (EF-P). Catalyzes the ATP-dependent activation of (R)-beta-lysine produced by EpmB, forming a lysyl-adenylate, from which the beta-lysyl moiety is then transferred to the epsilon-amino group of a conserved specific lysine residue in EF-P. The protein is Elongation factor P--(R)-beta-lysine ligase of Buchnera aphidicola subsp. Acyrthosiphon pisum (strain APS) (Acyrthosiphon pisum symbiotic bacterium).